The following is a 253-amino-acid chain: Decarboxylase DEC1 (253 aa).

Lysine 121 acts as the Schiff-base intermediate with acetoacetate in catalysis.

It belongs to the ADC family.

It functions in the pathway mycotoxin biosynthesis. Functionally, decarboxylase; part of the Tox1B locus, one of the 2 loci that mediate the biosynthesis of T-toxin, a family of linear polyketides 37 to 45 carbons in length, of which the major component is 41 carbons, and which leads to high virulence to maize. One of the PKSs (PKS1 or PKS2) could synthesize a precursor, used subsequently by the other PKS as starter unit, to add additional carbons. Variability in the length of the final carbon backbone C35-47 could be achieved by varying the number of condensation cycles, or use of different starter or extender units or might be due to decarboxylation of the penultimate product, catalyzed by DEC1. Additional proteins are required for the biosynthesis of T-toxin, including oxidoreductases RED1, RED2, RED3, LAM1 and OXI1, as well as esterase TOX9. In Cochliobolus heterostrophus (strain C4 / ATCC 48331 / race T) (Southern corn leaf blight fungus), this protein is Decarboxylase DEC1.